The chain runs to 337 residues: Large ribosomal subunit protein uL3 (337 aa).

Positions 1–20 (MASIHRPKRGSLAFSPRKRA) are disordered.

The protein belongs to the universal ribosomal protein uL3 family. As to quaternary structure, part of the 50S ribosomal subunit. Forms a cluster with proteins L14 and L24e.

One of the primary rRNA binding proteins, it binds directly near the 3'-end of the 23S rRNA, where it nucleates assembly of the 50S subunit. This Methanosarcina acetivorans (strain ATCC 35395 / DSM 2834 / JCM 12185 / C2A) protein is Large ribosomal subunit protein uL3.